The following is a 505-amino-acid chain: Monocarboxylate transporter 10 (505 aa).

Residues 1 to 14 (MTEPEPTLEQEPTP) show a composition bias toward acidic residues. Residues 1-64 (MTEPEPTLEQ…EQKSPEEFEP (64 aa)) are disordered. At 1–66 (MTEPEPTLEQ…KSPEEFEPPE (66 aa)) the chain is on the cytoplasmic side. Pro residues predominate over residues 15–31 (EPEPTQEPTPEPTPEPE). Positions 32–41 (PTQEPESEPE) are enriched in acidic residues. A helical transmembrane segment spans residues 67-87 (GGWGWVVMLASMWCNGSVFGI). Topologically, residues 88 to 114 (QNAFGIMFVYLLNEFGSEHDADLRFKT) are extracellular. The chain crosses the membrane as a helical span at residues 115 to 135 (AWVGSLSMGMIFFCSPIVSVF). Topologically, residues 136–142 (TDLLGCR) are cytoplasmic. The chain crosses the membrane as a helical span at residues 143–163 (ITAVGGAAVGCVGLLASSFVT). Residues 164–171 (SLGPMYFT) are Extracellular-facing. Residues 172–192 (YGIVFACGCSFAYQPSLVILG) traverse the membrane as a helical segment. The Cytoplasmic segment spans residues 193–204 (HYFKRRLGLVNG). A helical transmembrane segment spans residues 205 to 225 (IVTAGSSVFTITLPYMLSGLL). At 226-235 (KSVGLYHTLR) the chain is on the extracellular side. Residues 236–256 (VLAIFMFILMLAGLTYKPLLP) form a helical membrane-spanning segment. At 257 to 286 (KPVSSSKPGSRCPPLSRIFNVNIWKSLGYR) the chain is on the cytoplasmic side. Residues 287 to 307 (IWAFGIPAALYGYFVPYVHLM) traverse the membrane as a helical segment. Residues 308–321 (THVEERFGPEANKE) lie on the Extracellular side of the membrane. Residues 322–342 (VLLACIGITSGVGRLIFGRVA) form a helical membrane-spanning segment. Residue Asp-343 is a topological domain, cytoplasmic. Residues 344–364 (YVPGVNKVFLQVSSFMVIGVM) form a helical membrane-spanning segment. Topologically, residues 365 to 377 (SMMIPLCHVFGGL) are extracellular. A helical membrane pass occupies residues 378-400 (IAVCLLMGLFDGCFICIMAPIAF). Over 401–411 (ELVGSQNVSQA) the chain is Cytoplasmic. A helical transmembrane segment spans residues 412–432 (IGFLLGMMSIPMTVGPPIAGF). Residues 433 to 443 (LRDRLGSYDVA) are Extracellular-facing. Residues 444–464 (FYLAGIPPLIGGAVLCAIPWV) traverse the membrane as a helical segment. The Cytoplasmic portion of the chain corresponds to 465 to 505 (EARRKRREAANTAENTEKMLESRSPPLEDTVCRTEEPESVI). Positions 474 to 505 (ANTAENTEKMLESRSPPLEDTVCRTEEPESVI) are disordered. Residues 494–505 (TVCRTEEPESVI) show a composition bias toward basic and acidic residues.

This sequence belongs to the major facilitator superfamily. Monocarboxylate porter (TC 2.A.1.13) family.

The protein resides in the cell membrane. Its subcellular location is the basolateral cell membrane. The catalysed reaction is L-tryptophan(in) = L-tryptophan(out). The enzyme catalyses L-tyrosine(in) = L-tyrosine(out). It catalyses the reaction L-phenylalanine(in) = L-phenylalanine(out). It carries out the reaction 3,3',5-triiodo-L-thyronine(out) = 3,3',5-triiodo-L-thyronine(in). The catalysed reaction is L-thyroxine(out) = L-thyroxine(in). Its function is as follows. Sodium- and proton-independent thyroid hormones and aromatic acids transporter. Mediates both uptake and efflux of 3,5,3'-triiodothyronine (T3) and 3,5,3',5'-tetraiodothyronine (T4) with high affinity, suggesting a role in the homeostasis of thyroid hormone levels. Responsible for low affinity bidirectional transport of the aromatic amino acids, such as phenylalanine, tyrosine, tryptophan and L-3,4-dihydroxyphenylalanine (L-dopa). Plays an important role in homeostasis of aromatic amino acids. This Danio rerio (Zebrafish) protein is Monocarboxylate transporter 10 (slc16a10).